The chain runs to 496 residues: MSDFLAYLTSAPSRPHGSANITDKCYDHQLRDLIAYLKQPGVAPSTADINGYLEAISPAVHSLSYLYLLRIRIQQLQEKTAVGVPNDLQPGGTLWNQTVKFLRSFDPIQIRYVGHEWRELVDSVANAALSVSKPILAVKMIRDALERLNTAGVFTSLHLMLVKLALLSSSYTYVLPVLDKLLCHFPSDTQNAHAGILLCSEHEPSTVFFTDSSGFSANLTYRDHLQFYMYSGMVYMALKKWDQASHCLGIVISAPTANSVSKIMVEAYKKWVLANLLGHGKLFSVPNLVAPHVTRVYQSLSKPYISLAEAFEKRDFQRLRTEISLGQTIWRADKNSGLVYQVFEAYDKFLIIKLGKTFSALTMPDVLQRASSCSKGSRDIEEFVVSLVMTKELRAKLSHSPGNETTTMLRFPLSSQSHALREEHIRFRLIQKEAALNTISRAITQTKITLETSHENLQVIAKNQKLAGSSERSGVVGSTEADGGGDLDEDLMGDGR.

In terms of domain architecture, PCI spans 243–411; sequence QASHCLGIVI…GNETTTMLRF (169 aa). Residues 468-496 form a disordered region; that stretch reads GSSERSGVVGSTEADGGGDLDEDLMGDGR. Residues 483-496 are compositionally biased toward acidic residues; the sequence is GGGDLDEDLMGDGR.

The protein belongs to the CSN3 family. Component of the COP9 signalosome (CSN) complex.

The protein localises to the cytoplasm. It localises to the nucleus. Its function is as follows. Component of the COP9 signalosome (CSN) complex that acts as an regulator of the ubiquitin (Ubl) conjugation pathway by mediating the deneddylation of the cullin subunit of SCF-type E3 ubiquitin-protein ligase complexes. The CSN complex seems to link protein degradation to sexual development. The chain is COP9 signalosome complex subunit 3 (csnC) from Emericella nidulans (strain FGSC A4 / ATCC 38163 / CBS 112.46 / NRRL 194 / M139) (Aspergillus nidulans).